Here is a 337-residue protein sequence, read N- to C-terminus: Casein kinase II subunit alpha (337 aa).

The Protein kinase domain maps to 47-332; that stretch reads YEIIRKIGRG…TREAMEHPYF (286 aa). Residues 53–61 and Lys76 contribute to the ATP site; that span reads IGRGKYSEV. Asp164 serves as the catalytic Proton acceptor.

Belongs to the protein kinase superfamily. CMGC Ser/Thr protein kinase family. CK2 subfamily. Tetramer of two alpha and two beta chains.

The enzyme catalyses L-seryl-[protein] + ATP = O-phospho-L-seryl-[protein] + ADP + H(+). It catalyses the reaction L-threonyl-[protein] + ATP = O-phospho-L-threonyl-[protein] + ADP + H(+). Casein kinases are operationally defined by their preferential utilization of acidic proteins such as caseins as substrates. The alpha chain contains the catalytic site. The chain is Casein kinase II subunit alpha (casK) from Dictyostelium discoideum (Social amoeba).